The chain runs to 54 residues: Large ribosomal subunit protein bL33 (54 aa).

The protein belongs to the bacterial ribosomal protein bL33 family.

This Chloroflexus aggregans (strain MD-66 / DSM 9485) protein is Large ribosomal subunit protein bL33.